Here is a 471-residue protein sequence, read N- to C-terminus: Rho GTPase-activating protein 15 (471 aa).

The tract at residues 1-20 (MQKSTNSDIPVETLNPTRQG) is disordered. Phosphoserine is present on serine 43. Residues 79–189 (MVEKEGYLQK…WFHAIKNAID (111 aa)) enclose the PH domain. Serine 196, serine 199, and serine 243 each carry phosphoserine. One can recognise a Rho-GAP domain in the interval 281–470 (SHLHTLCERE…LMLSAYDQIF (190 aa)).

It is found in the cytoplasm. The protein resides in the membrane. Its function is as follows. GTPase activator for the Rho-type GTPases by converting them to an inactive GDP-bound state. Has activity toward RAC1. Overexpression results in an increase in actin stress fibers and cell contraction. This is Rho GTPase-activating protein 15 (ARHGAP15) from Bos taurus (Bovine).